Here is a 545-residue protein sequence, read N- to C-terminus: Endo-beta-N-acetylglucosaminidase (545 aa).

The N-terminal stretch at 1–36 (MTFIKQMMPRYVASMTAGIVAAAMAATCAFAPVANA) is a signal peptide. A GH18 domain is found at 51-333 (RHFMVYYRAW…EDLRRIVPSN (283 aa)). The active-site Proton donor is the E184. The interval 486 to 511 (PVPTPDSTDQNGNRDKVTNHKVQGQP) is disordered. The helical transmembrane segment at 518–538 (GISTDIIVAVGVTLAIAGVAL) threads the bilayer.

The protein belongs to the glycosyl hydrolase 18 family.

The protein resides in the cell membrane. The enzyme catalyses an N(4)-(oligosaccharide-(1-&gt;3)-[oligosaccharide-(1-&gt;6)]-beta-D-Man-(1-&gt;4)-beta-D-GlcNAc-(1-&gt;4)-alpha-D-GlcNAc)-L-asparaginyl-[protein] + H2O = an oligosaccharide-(1-&gt;3)-[oligosaccharide-(1-&gt;6)]-beta-D-Man-(1-&gt;4)-D-GlcNAc + N(4)-(N-acetyl-beta-D-glucosaminyl)-L-asparaginyl-[protein]. Endoglycosidase with broad specificity that cleaves the chitobiose core of high mannose and complex N-linked glycans. Is able to release N-glycans from diverse host glycoproteins such as human and bovine lactoferrin, immunoglobulins A and G, and ribonuclease B. Is active directly on human breast milk - a complex matrix of lipids, oligosaccharides, and proteins with disparate glycosylation types - successfully removing a significant proportion of the total amount of N-glycans. Does not recognize O-linked glycans or free human milk oligosaccharides (HMO). The polypeptide is Endo-beta-N-acetylglucosaminidase (Bifidobacterium longum subsp. infantis (strain ATCC 15697 / DSM 20088 / JCM 1222 / NCTC 11817 / S12)).